The chain runs to 118 residues: uncharacterized protein (118 aa).

A helical transmembrane segment spans residues 21–38 (IVYFFFFFGLETFFSIIN).

The protein resides in the membrane. This is an uncharacterized protein from Dictyostelium discoideum (Social amoeba).